Reading from the N-terminus, the 37-residue chain is Large ribosomal subunit protein bL36 (37 aa).

The protein belongs to the bacterial ribosomal protein bL36 family.

The sequence is that of Large ribosomal subunit protein bL36 from Caldanaerobacter subterraneus subsp. tengcongensis (strain DSM 15242 / JCM 11007 / NBRC 100824 / MB4) (Thermoanaerobacter tengcongensis).